A 230-amino-acid polypeptide reads, in one-letter code: Ubiquitin carboxyl-terminal hydrolase isozyme L3 (230 aa).

Residues 5 to 229 (RWLPLEANPE…LRFNAIALSA (225 aa)) form the UCH catalytic domain. Positions 8–13 (PLEANP) are interaction with ubiquitin. C95 (nucleophile) is an active-site residue. Residue S130 is modified to Phosphoserine. The interval 152 to 159 (AHEGQTEA) is interaction with ubiquitin. Crossover loop which restricts access of large ubiquitin adducts to the active site. Catalysis depends on H169, which acts as the Proton donor. The interaction with ubiquitin stretch occupies residues 219–224 (ELRFNA).

The protein belongs to the peptidase C12 family. Preferentially binds diubiquitin; the interaction does not hydrolyze diubiquitin but, in vitro, inhibits the hydrolyzing activity on other substrates. Ubiquitously expressed, with highest levels in brain, liver, heart, thymus, kidney and testis. Highly expressed in the cauda epididymidis, in meiotic pachytene spermatocytes and post-meiotic spematids. In the retina, enriched in the photoreceptor inner segment.

The protein localises to the cytoplasm. It carries out the reaction Thiol-dependent hydrolysis of ester, thioester, amide, peptide and isopeptide bonds formed by the C-terminal Gly of ubiquitin (a 76-residue protein attached to proteins as an intracellular targeting signal).. Its activity is regulated as follows. Inhibited by monoubiquitin and diubiquitin. Functionally, deubiquitinating enzyme (DUB) that controls levels of cellular ubiquitin through processing of ubiquitin precursors and ubiquitinated proteins. Thiol protease that recognizes and hydrolyzes a peptide bond at the C-terminal glycine of either ubiquitin or NEDD8. Has a 10-fold preference for Arg and Lys at position P3'', and exhibits a preference towards 'Lys-48'-linked ubiquitin chains. Deubiquitinates ENAC in apical compartments, thereby regulating apical membrane recycling. Indirectly increases the phosphorylation of IGFIR, AKT and FOXO1 and promotes insulin-signaling and insulin-induced adipogenesis. Required for stress-response retinal, skeletal muscle and germ cell maintenance. May be involved in working memory. Can hydrolyze UBB(+1), a mutated form of ubiquitin which is not effectively degraded by the proteasome. This is Ubiquitin carboxyl-terminal hydrolase isozyme L3 (Uchl3) from Mus musculus (Mouse).